Reading from the N-terminus, the 299-residue chain is 33 kDa chaperonin (299 aa).

Disulfide bonds link Cys234–Cys236 and Cys268–Cys271.

The protein belongs to the HSP33 family. Post-translationally, under oxidizing conditions two disulfide bonds are formed involving the reactive cysteines. Under reducing conditions zinc is bound to the reactive cysteines and the protein is inactive.

Its subcellular location is the cytoplasm. Its function is as follows. Redox regulated molecular chaperone. Protects both thermally unfolding and oxidatively damaged proteins from irreversible aggregation. Plays an important role in the bacterial defense system toward oxidative stress. The chain is 33 kDa chaperonin from Pseudomonas putida (strain ATCC 47054 / DSM 6125 / CFBP 8728 / NCIMB 11950 / KT2440).